The following is a 156-amino-acid chain: Small ribosomal subunit protein uS7 (156 aa).

The protein belongs to the universal ribosomal protein uS7 family. Part of the 30S ribosomal subunit. Contacts proteins S9 and S11.

Its function is as follows. One of the primary rRNA binding proteins, it binds directly to 16S rRNA where it nucleates assembly of the head domain of the 30S subunit. Is located at the subunit interface close to the decoding center, probably blocks exit of the E-site tRNA. This Rhodospirillum rubrum (strain ATCC 11170 / ATH 1.1.1 / DSM 467 / LMG 4362 / NCIMB 8255 / S1) protein is Small ribosomal subunit protein uS7.